We begin with the raw amino-acid sequence, 417 residues long: Glucose-1-phosphate adenylyltransferase (417 aa).

Alpha-D-glucose 1-phosphate contacts are provided by residues Tyr105, Gly170, 185-186 (EK), and Ser203.

It belongs to the bacterial/plant glucose-1-phosphate adenylyltransferase family. As to quaternary structure, homotetramer.

The enzyme catalyses alpha-D-glucose 1-phosphate + ATP + H(+) = ADP-alpha-D-glucose + diphosphate. It functions in the pathway glycan biosynthesis; glycogen biosynthesis. Functionally, involved in the biosynthesis of ADP-glucose, a building block required for the elongation reactions to produce glycogen. Catalyzes the reaction between ATP and alpha-D-glucose 1-phosphate (G1P) to produce pyrophosphate and ADP-Glc. This is Glucose-1-phosphate adenylyltransferase from Granulibacter bethesdensis (strain ATCC BAA-1260 / CGDNIH1).